The primary structure comprises 181 residues: Probable pyruvoyl-dependent arginine decarboxylase (181 aa).

Ser-43 carries the pyruvic acid (Ser) modification.

It belongs to the PdaD family. Pyruvate serves as cofactor.

It catalyses the reaction L-arginine + H(+) = agmatine + CO2. This is Probable pyruvoyl-dependent arginine decarboxylase from Chlorobaculum parvum (strain DSM 263 / NCIMB 8327) (Chlorobium vibrioforme subsp. thiosulfatophilum).